A 210-amino-acid chain; its full sequence is MALQSLPCRHGSPTIRLTADTPIVPDSERLPLKRDEPGSRSMRSTFIPSSQCSNLSSATASSSRRRSCRRYQHGEAVASSSTRWRTKWNLFIICLLLLCLPGLAVRYMHDMFSPCISGVANSQHSSSQSPRSHCRSLVPSFIAIYSASVVLCALISCFLDPYETTLPLTNVTNCLTLFRSSGSLRSEHRCSTSDSRRSRQQLSITSRGSA.

The span at 26–38 (DSERLPLKRDEPG) shows a compositional bias: basic and acidic residues. The segment at 26 to 58 (DSERLPLKRDEPGSRSMRSTFIPSSQCSNLSSA) is disordered. Low complexity predominate over residues 49 to 58 (SSQCSNLSSA).

The catalysed reaction is cutin + H2O = cutin monomers.. In Phytophthora capsici, this protein is Putative cutinase.